A 473-amino-acid polypeptide reads, in one-letter code: tRNA modification GTPase MnmE (473 aa).

Residues Arg31, Glu95, and Arg134 each coordinate (6S)-5-formyl-5,6,7,8-tetrahydrofolate. A TrmE-type G domain is found at 230-394 (GVSTVIAGKP…LKQHMGDLVK (165 aa)). Residues 240–245 (NAGKST), 259–265 (SHMPGTT), and 284–287 (DTAG) each bind GTP. Mg(2+) is bound by residues Ser244 and Thr265. Lys473 provides a ligand contact to (6S)-5-formyl-5,6,7,8-tetrahydrofolate.

Belongs to the TRAFAC class TrmE-Era-EngA-EngB-Septin-like GTPase superfamily. TrmE GTPase family. As to quaternary structure, homodimer. Heterotetramer of two MnmE and two MnmG subunits. It depends on K(+) as a cofactor.

The protein resides in the cytoplasm. Functionally, exhibits a very high intrinsic GTPase hydrolysis rate. Involved in the addition of a carboxymethylaminomethyl (cmnm) group at the wobble position (U34) of certain tRNAs, forming tRNA-cmnm(5)s(2)U34. This is tRNA modification GTPase MnmE from Chlorobaculum tepidum (strain ATCC 49652 / DSM 12025 / NBRC 103806 / TLS) (Chlorobium tepidum).